Consider the following 134-residue polypeptide: Large ribosomal subunit protein uL18 (134 aa).

This sequence belongs to the universal ribosomal protein uL18 family. Part of the 50S ribosomal subunit; part of the 5S rRNA/L5/L18/L25 subcomplex. Contacts the 5S and 23S rRNAs.

Functionally, this is one of the proteins that bind and probably mediate the attachment of the 5S RNA into the large ribosomal subunit, where it forms part of the central protuberance. The protein is Large ribosomal subunit protein uL18 of Corynebacterium efficiens (strain DSM 44549 / YS-314 / AJ 12310 / JCM 11189 / NBRC 100395).